The following is a 260-amino-acid chain: Thiazole synthase (260 aa).

The Schiff-base intermediate with DXP role is filled by Lys-102. Residues Gly-163, 189–190 (AG), and 211–212 (NT) contribute to the 1-deoxy-D-xylulose 5-phosphate site.

Belongs to the ThiG family. As to quaternary structure, homotetramer. Forms heterodimers with either ThiH or ThiS.

The protein resides in the cytoplasm. The catalysed reaction is [ThiS sulfur-carrier protein]-C-terminal-Gly-aminoethanethioate + 2-iminoacetate + 1-deoxy-D-xylulose 5-phosphate = [ThiS sulfur-carrier protein]-C-terminal Gly-Gly + 2-[(2R,5Z)-2-carboxy-4-methylthiazol-5(2H)-ylidene]ethyl phosphate + 2 H2O + H(+). It functions in the pathway cofactor biosynthesis; thiamine diphosphate biosynthesis. Functionally, catalyzes the rearrangement of 1-deoxy-D-xylulose 5-phosphate (DXP) to produce the thiazole phosphate moiety of thiamine. Sulfur is provided by the thiocarboxylate moiety of the carrier protein ThiS. In vitro, sulfur can be provided by H(2)S. The polypeptide is Thiazole synthase (Geotalea uraniireducens (strain Rf4) (Geobacter uraniireducens)).